A 524-amino-acid chain; its full sequence is MAVTSPWFRAVVSAAQMQEIENWLFTQGMPVAALMEKAALQTAQRLLTLYPLSTYPRIGVVVGPGHNGGDGLVVARELKLQGYQVQVLQPLDKLKPLTQNHVDYGKSLGIPWVDGVQALAHCDLIIDALFGVGLTRLITGAIADLITTINNLPIPVVSIDLPSGIETDTGEILGVAVEADRSFCLGLWKRAYFQDRALAHLGQTELLGIGLPPQAIANVLGEVWPVQVLGADQAQQTLPLSRPLVTHKYQQGHLLLICGSQQYAGGALLTTLGARASGVGMVTVAVPMGIKALLHSQCPEVLVKGLLETPSGAIAGLGNLDLSRYSAVALGPGLGSDVGPLVEEVLSVNCPLILDADGLNQLAQQQLLPLLAVRTAPTVLTPHGGEFKRLFPDIDQGDRLTAVQTAAAMCQATVLLKGAKTVIASPTGPTWAIKDSTPALARGGSGDVLTGLMGGILAQPEKFDLAQRVATAAWWHAQAGILASQQRTILGVDAQHLAEYLIPACRQWLGPNVANWPANLSHSS.

An NAD(P)H-hydrate epimerase region spans residues 1–223; the sequence is MAVTSPWFRA…QAIANVLGEV (223 aa). The YjeF N-terminal domain occupies 17 to 217; the sequence is MQEIENWLFT…GIGLPPQAIA (201 aa). Residues 66-70 form an NADPHX 1; for epimerase activity region; that stretch reads HNGGD. K(+)-binding residues include asparagine 67 and aspartate 127. The segment at 131 to 137 is NADPHX 1; for epimerase activity; it reads GVGLTRL. Aspartate 160 lines the (6S)-NADPHX pocket. A K(+)-binding site is contributed by serine 163. The YjeF C-terminal domain occupies 231–508; the sequence is ADQAQQTLPL…EYLIPACRQW (278 aa). The segment at 231-524 is ADP-dependent (S)-NAD(P)H-hydrate dehydratase; the sequence is ADQAQQTLPL…NWPANLSHSS (294 aa). Glycine 333 lines the (6S)-NADPHX pocket. The tract at residues 383–389 is NADPHX 2; for dehydratase activity; sequence HGGEFKR. ADP contacts are provided by residues 417–421 and 437–446; these read KGAKT and TPALARGGSG. Aspartate 447 lines the (6S)-NADPHX pocket.

The protein in the N-terminal section; belongs to the NnrE/AIBP family. It in the C-terminal section; belongs to the NnrD/CARKD family. K(+) is required as a cofactor.

It carries out the reaction (6S)-NADHX + ADP = AMP + phosphate + NADH + H(+). It catalyses the reaction (6S)-NADPHX + ADP = AMP + phosphate + NADPH + H(+). The enzyme catalyses (6R)-NADHX = (6S)-NADHX. The catalysed reaction is (6R)-NADPHX = (6S)-NADPHX. Functionally, bifunctional enzyme that catalyzes the epimerization of the S- and R-forms of NAD(P)HX and the dehydration of the S-form of NAD(P)HX at the expense of ADP, which is converted to AMP. This allows the repair of both epimers of NAD(P)HX, a damaged form of NAD(P)H that is a result of enzymatic or heat-dependent hydration. The sequence is that of Bifunctional NAD(P)H-hydrate repair enzyme Nnr (nnr) from Synechocystis sp. (strain ATCC 27184 / PCC 6803 / Kazusa).